The sequence spans 157 residues: Probable cyclic pyranopterin monophosphate synthase (157 aa).

Substrate contacts are provided by residues 75 to 77 and 111 to 112; these read MCH and ME. The active site involves D126.

This sequence belongs to the MoaC family. Homohexamer; trimer of dimers.

The catalysed reaction is (8S)-3',8-cyclo-7,8-dihydroguanosine 5'-triphosphate = cyclic pyranopterin phosphate + diphosphate. It functions in the pathway cofactor biosynthesis; molybdopterin biosynthesis. Functionally, catalyzes the conversion of (8S)-3',8-cyclo-7,8-dihydroguanosine 5'-triphosphate to cyclic pyranopterin monophosphate (cPMP). This Methanosarcina mazei (strain ATCC BAA-159 / DSM 3647 / Goe1 / Go1 / JCM 11833 / OCM 88) (Methanosarcina frisia) protein is Probable cyclic pyranopterin monophosphate synthase.